Consider the following 578-residue polypeptide: DNA primase (578 aa).

A CHC2-type zinc finger spans residues 40–64; sequence CPFHQEKTPSFTVNFEKQFYFCFGC. The 83-residue stretch at 257–339 folds into the Toprim domain; sequence KQILIVEGYV…GKNVKFIFLP (83 aa). Positions 263, 307, and 309 each coordinate Mg(2+).

This sequence belongs to the DnaG primase family. Monomer. Interacts with DnaB. It depends on Zn(2+) as a cofactor. Mg(2+) serves as cofactor.

It carries out the reaction ssDNA + n NTP = ssDNA/pppN(pN)n-1 hybrid + (n-1) diphosphate.. Its function is as follows. RNA polymerase that catalyzes the synthesis of short RNA molecules used as primers for DNA polymerase during DNA replication. This chain is DNA primase, found in Buchnera aphidicola subsp. Baizongia pistaciae (strain Bp).